A 122-amino-acid chain; its full sequence is Small ribosomal subunit protein uS12c (122 aa).

This sequence belongs to the universal ribosomal protein uS12 family. In terms of assembly, part of the 30S ribosomal subunit.

It is found in the plastid. The protein localises to the chloroplast. In terms of biological role, with S4 and S5 plays an important role in translational accuracy. Located at the interface of the 30S and 50S subunits. The protein is Small ribosomal subunit protein uS12c (rps12) of Illicium oligandrum (Star anise).